Here is a 121-residue protein sequence, read N- to C-terminus: Neuromedin-B (121 aa).

The first 24 residues, Met-1–Ala-24, serve as a signal peptide directing secretion. Met-56 bears the Methionine amide mark. The propeptide occupies Ser-60–Lys-121.

Belongs to the bombesin/neuromedin-B/ranatensin family. As to expression, higher expression in the central nervous system (CNS) than in peripheral tissues. Highest levels are found in the olfactory bulb. Relatively high levels in the CNS (including the cerebral cortex, cerebellum, spinal cord, medulla oblongata, midbrain, hypothalamus, hippocampus, and hypophysis) and in peripheral tissues such as the pancreas, adrenal gland, testis, ovary and cecum. Moderate levels are found in the rectum, heart and pons with low expression levels detected in the bone marrow and duodenum. Other tissues show no or low levels of expression.

The protein resides in the secreted. The protein localises to the cell projection. Its subcellular location is the neuron projection. In terms of biological role, stimulates smooth muscle contraction. Induces sighing by acting directly on the pre-Botzinger complex, a cluster of several thousand neurons in the ventrolateral medulla responsible for inspiration during respiratory activity. Contributes to the induction of sneezing following exposure to chemical irritants or allergens which causes release of NMB by nasal sensory neurons and activation of NMBR-expressing neurons in the sneeze-evoking region of the brainstem. These in turn activate neurons of the caudal ventral respiratory group, giving rise to the sneezing response. Contributes to induction of acute itch, possibly through activation of the NMBR receptor on dorsal root ganglion neurons. Increases expression of NMBR and steroidogenic mediators STAR, CYP11A1 and HSD3B1 in Leydig cells, induces secretion of testosterone by Leydig cells and also promotes Leydig cell proliferation. Plays a role in the innate immune response to influenza A virus infection by enhancing interferon alpha expression and reducing expression of IL6. Plays a role in CSF1-induced proliferation of osteoclast precursors by contributing to positive regulation of the expression of the CSF1 receptor CSF1R. This Sus scrofa (Pig) protein is Neuromedin-B (NMB).